The chain runs to 271 residues: Calretinin (271 aa).

6 consecutive EF-hand domains span residues 16–51 (LTAS…LEKA), 63–98 (NFGE…EENF), 107–142 (GSSA…LLKK), 151–186 (KLQE…QENF), 195–230 (LTSE…LYEK), and 235–270 (MNIQ…SEPP). Residues Asp-29, Asp-31, Asn-33, Tyr-35, Glu-40, Asp-76, Asn-78, Asp-80, Lys-82, Glu-87, Asp-120, Asp-122, Ser-124, Tyr-126, Glu-131, Asp-164, Asn-166, Asp-168, Lys-170, Glu-175, Asp-208, Asp-210, Ser-212, Tyr-214, and Glu-219 each contribute to the Ca(2+) site. At Tyr-214 the chain carries Phosphotyrosine.

It belongs to the calbindin family. In terms of tissue distribution, brain.

The protein resides in the synapse. Its subcellular location is the cell projection. The protein localises to the dendrite. In terms of biological role, calcium-binding protein involved in calcium homeostasis and signal transduction. It plays a critical role in buffering intracellular calcium levels and modulating calcium-dependent signaling pathways. Predominantly expressed in specific neuronal populations, influences synaptic plasticity and neuronal excitability, contributing to learning and memory. During embryonic development, it facilitates neuronal differentiation and maturation. This chain is Calretinin, found in Homo sapiens (Human).